The sequence spans 280 residues: Diaminopimelate epimerase (280 aa).

Substrate contacts are provided by N11 and N62. The active-site Proton donor is C71. Residues G72–N73, N160, N193, and E211–R212 each bind substrate. C220 serves as the catalytic Proton acceptor. Residue G221–T222 participates in substrate binding.

This sequence belongs to the diaminopimelate epimerase family. Homodimer.

The protein resides in the cytoplasm. It carries out the reaction (2S,6S)-2,6-diaminopimelate = meso-2,6-diaminopimelate. Its pathway is amino-acid biosynthesis; L-lysine biosynthesis via DAP pathway; DL-2,6-diaminopimelate from LL-2,6-diaminopimelate: step 1/1. Its function is as follows. Catalyzes the stereoinversion of LL-2,6-diaminopimelate (L,L-DAP) to meso-diaminopimelate (meso-DAP), a precursor of L-lysine and an essential component of the bacterial peptidoglycan. The chain is Diaminopimelate epimerase from Acetivibrio thermocellus (strain ATCC 27405 / DSM 1237 / JCM 9322 / NBRC 103400 / NCIMB 10682 / NRRL B-4536 / VPI 7372) (Clostridium thermocellum).